Reading from the N-terminus, the 497-residue chain is GDP-fucose protein O-fucosyltransferase 4 (497 aa).

Residues 1-6 (MACRRR) are Cytoplasmic-facing. The helical; Signal-anchor for type II membrane protein transmembrane segment at 7–27 (LLPCAGLGLFGVLCWVWVSFA) threads the bilayer. Over 28–497 (SFPDDQLPLE…ITERRARGKH (470 aa)) the chain is Lumenal. N-linked (GlcNAc...) asparagine glycosylation occurs at asparagine 169. A disulfide bridge links cysteine 392 with cysteine 395. The segment at 406–427 (RAHRKDPERNPPPLPKMASNSH) is disordered. N-linked (GlcNAc...) asparagine glycosylation is present at asparagine 474.

Belongs to the glycosyltransferase 10 family.

The protein localises to the endoplasmic reticulum membrane. It carries out the reaction L-threonyl-[protein] + GDP-beta-L-fucose = 3-O-(alpha-L-fucosyl)-L-threonyl-[protein] + GDP + H(+). It catalyses the reaction L-seryl-[protein] + GDP-beta-L-fucose = 3-O-(alpha-L-fucosyl)-L-seryl-[protein] + GDP + H(+). It participates in protein modification; protein glycosylation. Protein O-fucosyltransferase that specifically catalyzes O-fucosylation of serine or threonine residues in EMI domains of target proteins. Attaches fucose through an O-glycosidic linkage. O-fucosylation of EMI domain-containing proteins may be required for facilitating protein folding and secretion. The chain is GDP-fucose protein O-fucosyltransferase 4 (fut11) from Oryzias latipes (Japanese rice fish).